The chain runs to 140 residues: Nucleoside diphosphate kinase (140 aa).

ATP is bound by residues Lys11, Phe59, Arg87, Thr93, Arg104, and Asn114. Catalysis depends on His117, which acts as the Pros-phosphohistidine intermediate.

This sequence belongs to the NDK family. In terms of assembly, homotetramer. Mg(2+) serves as cofactor.

It localises to the cytoplasm. It catalyses the reaction a 2'-deoxyribonucleoside 5'-diphosphate + ATP = a 2'-deoxyribonucleoside 5'-triphosphate + ADP. The catalysed reaction is a ribonucleoside 5'-diphosphate + ATP = a ribonucleoside 5'-triphosphate + ADP. Its function is as follows. Major role in the synthesis of nucleoside triphosphates other than ATP. The ATP gamma phosphate is transferred to the NDP beta phosphate via a ping-pong mechanism, using a phosphorylated active-site intermediate. This is Nucleoside diphosphate kinase from Methylobacterium sp. (strain 4-46).